A 1246-amino-acid polypeptide reads, in one-letter code: Stromal processing peptidase, chloroplastic (1246 aa).

A chloroplast-targeting transit peptide spans 1 to 136; it reads MASFPSPPLA…AKIRRRHVLH (136 aa). Residue His228 coordinates Zn(2+). Glu231 functions as the Proton acceptor in the catalytic mechanism. Residue His232 coordinates Zn(2+). Glu302 is a catalytic residue. Glu309 contributes to the Zn(2+) binding site.

The protein belongs to the peptidase M16 family. Requires Zn(2+) as cofactor.

It localises to the plastid. Its subcellular location is the chloroplast stroma. In terms of biological role, cleaves presequences (transit peptides) from chloroplastic protein precursors. Initially recognizes a precursor by binding to the C-terminus of its transit peptide and then removes the transit peptide in a single endoproteolytic step. In a next step, pursues the cleavage of transit peptide to a subfragment form. The sequence is that of Stromal processing peptidase, chloroplastic from Oryza sativa subsp. japonica (Rice).